The primary structure comprises 224 residues: Menaquinol:cytochrome c reductase cytochrome b subunit (224 aa).

The helical transmembrane segment at 37–57 (FSAFVYCFGGLTFFVTVIQIL) threads the bilayer. Tyrosine 42 serves as a coordination point for heme b. Heme c is bound at residue cysteine 43. Arginine 91, histidine 94, histidine 108, and arginine 111 together coordinate heme b. Helical transmembrane passes span 96–116 (WGAS…FFQG), 126–146 (WIVG…GYLL), and 195–215 (IHVF…FLMI). Heme b contacts are provided by histidine 196 and histidine 211. Heme c-binding residues include arginine 216 and isoleucine 220. Residue serine 221 participates in heme b binding.

This sequence belongs to the cytochrome b family. The main subunits of the menaquinol:cytochrome c complex are a Rieske-type iron-sulfur protein (QcrA), a cytochrome b (QcrB) and a cytochrome c (QcrC). The cofactor is heme b. Requires heme c as cofactor.

The protein localises to the cell membrane. Its function is as follows. Component of the menaquinol:cytochrome c reductase complex. The chain is Menaquinol:cytochrome c reductase cytochrome b subunit (qcrB) from Geobacillus thermodenitrificans.